The sequence spans 377 residues: Chaperone protein DnaJ (377 aa).

Residues 5 to 70 (DFYEVLGVDR…EKRSAYDRMG (66 aa)) form the J domain. Residues 136-214 (GCKKEISFTA…CHGTGVKDKS (79 aa)) form a CR-type zinc finger. Zn(2+)-binding residues include Cys-149, Cys-152, Cys-166, Cys-169, Cys-188, Cys-191, Cys-202, and Cys-205. 4 CXXCXGXG motif repeats span residues 149–156 (CETCDGKG), 166–173 (CSTCGGHG), 188–195 (CPNCGGSG), and 202–209 (CNDCHGTG). A disordered region spans residues 353–377 (LDGDSKHHQSPKKKSFFEKLGDLFD). The segment covering 367–377 (SFFEKLGDLFD) has biased composition (basic and acidic residues).

It belongs to the DnaJ family. In terms of assembly, homodimer. The cofactor is Zn(2+).

It localises to the cytoplasm. Participates actively in the response to hyperosmotic and heat shock by preventing the aggregation of stress-denatured proteins and by disaggregating proteins, also in an autonomous, DnaK-independent fashion. Unfolded proteins bind initially to DnaJ; upon interaction with the DnaJ-bound protein, DnaK hydrolyzes its bound ATP, resulting in the formation of a stable complex. GrpE releases ADP from DnaK; ATP binding to DnaK triggers the release of the substrate protein, thus completing the reaction cycle. Several rounds of ATP-dependent interactions between DnaJ, DnaK and GrpE are required for fully efficient folding. Also involved, together with DnaK and GrpE, in the DNA replication of plasmids through activation of initiation proteins. This chain is Chaperone protein DnaJ, found in Psychrobacter sp. (strain PRwf-1).